Here is a 3011-residue protein sequence, read N- to C-terminus: MADPGMMSLFGEDGNIFSEGLEGLGECGYPENTVNPMGQQMPMDQGFPSLQSSLHHPPANQNQAKLTHFDHYNQYEQQKMHLMDQPNRMISNAPGNGIASPHSQYHNPPVPQVPHGSGASGQMGVYPSMQNERHGQPFVDSGSMWGPRAVQVPDQIRAPYQQQQQQPQPTQPPQAPSGPPGQGHPQHMQQMGNYMARGDFSMQQHGQPQQQRMNQFSQGQEGLNQGNPFIATSGPGHLSHVPQQNPSMAPSLRHSVQQFHHHPPTALHGESVAHSPRFSPNPPQQGAVRPQTLNFSSRSQTVPSPTINNSGQYSRYPYSNLNQGLVNNTGMNQNLGLTNNTPMNQSVPRYPNAVGFPSNSGQGLMHQQPIHPSGSLNQMNTQTMHPSQPQGTYASPPPMSPMKAMSNPAGTPPPQVRPGSAGIPMEVGSYPNIPHPQPSHQPPGAMGIGQRNMGPRNMQQNRPFMGMSSTPREMGGHMRPNGCPGVGLADPQAIQERLISGQQLPSQQQSFQQQMPTCPPMQPHPGIHHQSSPPPHPHHQPWAQLHQSPQNTPQKVPVLQHSPSEPFLEKPVPDMTQVSGPNTQLVKSDDYLPSVEPQPQQKKKKKKNNHIAAEGPSKSFGKEDFPGGLDSQNLSRNSVDCSQEDKKKKKKPKAKKEPKDPKEPKEKKEPKTPKVPKTPKEPKEKKAKNTTPKPKTSKKTSNKKTDSESSAAKKKVNKGKEGSENSDLDKTPPPSPHPEDEDDPGVQKRRSSRQVKRKRYTEDLEFKISDEEADDADAAGRDSPSNTSQSEQQESADAEGPVVEKIMSSRSVKKKMENGEEVEIEEFYVKYKNFSYLHCQWASVEELDKDKRIQQKIKRFKAKQGQNKFLSEIDDELFNPDYVEIDRILDFSRSTDDNGEPVTHYLVKWCSLPYEDSTWELKQDIDQAKIEEFEKLMSREPEMERVERPPADDWKKSESSREYKNNNKLREYQLEGVNWLLFNWYNTRNCILADEMGLGKTIQSITFLYEIYLKGIHGPFLVIAPLSTIPNWEREFRTWTELNVVVYHGSQASRRTIQLYEMYFKDPQGRVIKGSYKFHAIITTFEMILTDCPELRNIPWRCVVIDEAHRLKNRNCKLLEGLKMMDLEHKVLLTGTPLQNTVEELFSLLHFLEPGRFPSETTFMQEFGDLKTEEQVQKLQAILKPMMLRRLKEDVEKNLAPKEETIIEVELTNIQKKYYRAILEKNFAFLSKGGGQANVPNLLNTMMELRKCCNHPYLINGAEEKILEEFKETHNADSPDFQLQAMIQAAGKLVLIDKLLPKLKAGGHRVLIFSQMVRCLDILEDYLIQRRYPYERIDGRVRGNLRQAAIDRFSRPDSDRFVFLLCTRAGGLGINLTAADTCIIFDSDWNPQNDLQAQARCHRIGQSKSVKIYRLITRNSYEREMFDKASLKLGLDKAVLQSMSGRENATNGVQQLSKKEIEDLLRKGAYGALMDEEDEGSKFCEEDIDQILLRRTHTITIESEGKGSTFAKASFVASGNRTDISLDDPNFWQKWAKKAELDIDALNGRNNLVIDTPRVRKQTRLYSAVKEDELMEFSDLESDSEEKPSTKPRRPQDKSQGYARSECFRVEKNLLVYGWGRWTDILSHGRYKRQLTEQDVETICRTILVYCLNHYKGDENIKSFIWDLITPTADGQTRALVNHSGLSAPVPRGRKGKKVKAQSSQPMLQDADWLTTCNPDVLFQEDSYRKHLKHHCNKVLLRVRMLYYLRQEVIGDQADRILEGADSSEVDVWIPEPFHAEVPADWWDKEADKSLLIGVFKHGYEKYNSMRADSTLCFLERVGMPDAKAIAAEQRGTDMLADGGDGGEFDREDEDPEYKPTRTPFKDEIDEFANSPPEDKEESIEIHPNKHSESNSELGQLYWPNTSTLTTRLRRLITAYQRSYKRQQMRQEALMKTDRRRRRPREEVRALEAEREAIITEKRQKWTRREEADFYRVVSTFGIIFDPIKHQFDWNQFRAFARLDKKSDESLEKYFNGFVNMCRRVCRMPVKPDDEPPDLSTMIEPITEERASRTLYRIELLRKIREQVLHHPQLGERLKLCQPSLDLPEWWECGKHDKDLLIGAAKHGVSRTDYHILNDPELSFLEAHKNFAQNRGTGNANTVSSLHPVGAGCSQTPPIVPSTPVQEEKSTEQTESKVEGSENPAAKEKSDIKEETDIADKDTKQDCDAEAETGSVKCELKDIEMSTDVDPKSISEKGSEEDEEEKLDDDDKSEESSQPEAGAVSQGKNFDEESNASMSTARDETRDGFYMEDGDPSVVQLLHERTFAFSFWPKDRVMINRLDNICEAVLKGKWPVNRRQMFDFQGLIPGYTPTAVDSPLQKRSFAELSMIGQASISGSEDITASPQLSKEDALNLSVPRQRRRRRRKIEIEAERAAKRRNLMEMVAQLRESQVVSENGQEKVVDLSKASREATSSTSNFSSVTSKFILPNVSTPVSDAFKTQMELLQAGLSRTPTRHLLNGSLIDGEPPMKRRRGRRKNVEGLDLLFMSNKRTSLTVEDAEVTKAFEEDMEALPARNIPSPGQLDPDTRIPVINLEDGTRLVGEDAPKNKDLVEWLKLHPTYTVDMPSYVPKSADVLFSSFQKPKQKRHRCRNPNKLDINTLTGEERVPVVNKRNGKKMGGAMAPPMKDLPRWLEENPEFAVAPDWTDIVKQSGFVPESMFDRLLTGPVVREEGASRRGRRPKSEIAKAAAAAAAVASTSGINPLLMNSLFAGMDLTSLQNLQNLQSLQLAGLMGFPPGLATAAAAGGDAKNPAAMLPLMLPGMAGLPNMFGLSGLLNNPITATTGNATTASGQGETEDGASKAEEKKNENEEENKDSEKSTDTVSATDSANGSVSAATAATTATATTTTTTNTGLPTNPLAFNPFLLSTMAPGLFYPSMFLPPGLGGLTLPGFPALAGLQNAVGSNEEKATDKTEGTAFKDEENLEGSDAEESLDKTADSSILEDEIAQGEELDSLDGGEEIENNENDE.

5 disordered regions span residues 90–146 (ISNA…SMWG), 159–189 (PYQQ…QHMQ), 202–422 (MQQH…GSAG), 502–806 (QQLP…VEKI), and 941–960 (PEME…SESS). The segment covering 159 to 168 (PYQQQQQQPQ) has biased composition (low complexity). A compositionally biased stretch (pro residues) spans 169–179 (PTQPPQAPSGP). Positions 203–215 (QQHGQPQQQRMNQ) are enriched in low complexity. 4 stretches are compositionally biased toward polar residues: residues 216–227 (FSQGQEGLNQGN), 241–258 (VPQQ…SVQQ), 291–347 (QTLN…NQSV), and 374–393 (GSLN…QGTY). Positions 502–516 (QQLPSQQQSFQQQMP) are enriched in low complexity. Polar residues-rich tracts occupy residues 576 to 586 (TQVSGPNTQLV) and 630 to 641 (DSQNLSRNSVDC). 2 stretches are compositionally biased toward basic and acidic residues: residues 655 to 684 (KKEP…EPKE) and 718 to 730 (KGKE…DLDK). A compositionally biased stretch (basic residues) spans 747-759 (QKRRSSRQVKRKR). The segment covering 760 to 770 (YTEDLEFKISD) has biased composition (basic and acidic residues). Residues 783–795 (SPSNTSQSEQQES) are compositionally biased toward polar residues. 2 consecutive Chromo domains span residues 801-868 (PVVE…GQNK) and 883-948 (VEID…RVER). A Helicase ATP-binding domain is found at 981-1155 (LFNWYNTRNC…FSLLHFLEPG (175 aa)). 994–1001 (DEMGLGKT) serves as a coordination point for ATP. The short motif at 1106–1109 (DEAH) is the DEAH box element. The Helicase C-terminal domain occupies 1295–1465 (LIDKLLPKLK…LSKKEIEDLL (171 aa)). 3 disordered regions span residues 1577-1602 (FSDL…SQGY), 1836-1869 (GTDM…KDEI), and 2136-2291 (GTGN…GFYM). Residues 1585–1597 (EEKPSTKPRRPQD) are compositionally biased toward basic and acidic residues. Over residues 1845–1856 (DGGEFDREDEDP) the composition is skewed to acidic residues. The span at 1857–1867 (EYKPTRTPFKD) shows a compositional bias: basic and acidic residues. Residues 2136–2145 (GTGNANTVSS) are compositionally biased toward polar residues. Composition is skewed to basic and acidic residues over residues 2166 to 2207 (QEEK…KQDC) and 2218 to 2238 (CELK…SEKG). Acidic residues predominate over residues 2239 to 2253 (SEEDEEEKLDDDDKS). Positions 2403-2433 (RRRRRKIEIEAERAAKRRNLMEMVAQLRESQ) form a coiled coil. Phosphoserine is present on Ser2561. Disordered stretches follow at residues 2825-2900 (TTGN…LPTN) and 2946-3011 (GSNE…ENDE). The span at 2841 to 2851 (GASKAEEKKNE) shows a compositional bias: basic and acidic residues. Polar residues predominate over residues 2864 to 2877 (DTVSATDSANGSVS). Residues 2878–2893 (AATAATTATATTTTTT) are compositionally biased toward low complexity. The segment covering 2948–2964 (NEEKATDKTEGTAFKDE) has biased composition (basic and acidic residues). 2 stretches are compositionally biased toward acidic residues: residues 2965–2974 (ENLEGSDAEE) and 2984–3011 (ILED…ENDE).

It belongs to the SNF2/RAD54 helicase family. As to expression, expressed in the neural epithelium, otic placodes, optic placodes, branchial arches, and the olfactory placodes,.

Its subcellular location is the nucleus. It carries out the reaction ATP + H2O = ADP + phosphate + H(+). ATP-dependent chromatin-remodeling factor, slides nucleosomes along DNA; nucleosome sliding requires ATP.Probable transcription regulator. Maybe involved in the in 45S precursor rRNA production. This is Chromodomain-helicase-DNA-binding protein 7 (CHD7) from Gallus gallus (Chicken).